The sequence spans 189 residues: GMP synthase [glutamine-hydrolyzing] subunit A (189 aa).

The Glutamine amidotransferase type-1 domain maps to 5-189; that stretch reads KILVVNNYGQ…MNFFEVCDLY (185 aa). The active-site Nucleophile is the C79. Active-site residues include H166 and E168.

As to quaternary structure, heterodimer composed of a glutamine amidotransferase subunit (A) and a GMP-binding subunit (B).

It catalyses the reaction XMP + L-glutamine + ATP + H2O = GMP + L-glutamate + AMP + diphosphate + 2 H(+). Its pathway is purine metabolism; GMP biosynthesis; GMP from XMP (L-Gln route): step 1/1. In terms of biological role, catalyzes the synthesis of GMP from XMP. The protein is GMP synthase [glutamine-hydrolyzing] subunit A of Methanosarcina mazei (strain ATCC BAA-159 / DSM 3647 / Goe1 / Go1 / JCM 11833 / OCM 88) (Methanosarcina frisia).